The chain runs to 293 residues: 4-hydroxy-tetrahydrodipicolinate synthase (293 aa).

Thr47 lines the pyruvate pocket. The active-site Proton donor/acceptor is Tyr135. Residue Lys163 is the Schiff-base intermediate with substrate of the active site. Val205 is a binding site for pyruvate.

Belongs to the DapA family. As to quaternary structure, homotetramer; dimer of dimers.

The protein localises to the cytoplasm. The catalysed reaction is L-aspartate 4-semialdehyde + pyruvate = (2S,4S)-4-hydroxy-2,3,4,5-tetrahydrodipicolinate + H2O + H(+). It participates in amino-acid biosynthesis; L-lysine biosynthesis via DAP pathway; (S)-tetrahydrodipicolinate from L-aspartate: step 3/4. Functionally, catalyzes the condensation of (S)-aspartate-beta-semialdehyde [(S)-ASA] and pyruvate to 4-hydroxy-tetrahydrodipicolinate (HTPA). In Methylibium petroleiphilum (strain ATCC BAA-1232 / LMG 22953 / PM1), this protein is 4-hydroxy-tetrahydrodipicolinate synthase.